The sequence spans 126 residues: Probable 4-amino-4-deoxy-L-arabinose-phosphoundecaprenol flippase subunit ArnF (126 aa).

A helical membrane pass occupies residues Met-1–Arg-21. Residues Ser-22 to Thr-47 are Periplasmic-facing. Residues Phe-48–Leu-68 traverse the membrane as a helical segment. The Cytoplasmic segment spans residues His-69–Ala-76. A helical transmembrane segment spans residues Tyr-77–Trp-97. Residues His-98–Pro-100 lie on the Periplasmic side of the membrane. Residues Phe-101–Trp-121 form a helical membrane-spanning segment. Residues Pro-122–Arg-126 lie on the Cytoplasmic side of the membrane.

It belongs to the ArnF family. In terms of assembly, heterodimer of ArnE and ArnF.

Its subcellular location is the cell inner membrane. It participates in bacterial outer membrane biogenesis; lipopolysaccharide biosynthesis. In terms of biological role, translocates 4-amino-4-deoxy-L-arabinose-phosphoundecaprenol (alpha-L-Ara4N-phosphoundecaprenol) from the cytoplasmic to the periplasmic side of the inner membrane. In Klebsiella pneumoniae subsp. pneumoniae (strain ATCC 700721 / MGH 78578), this protein is Probable 4-amino-4-deoxy-L-arabinose-phosphoundecaprenol flippase subunit ArnF.